The following is a 27-amino-acid chain: Cruzioseptin-14 (27 aa).

Expressed by the skin glands.

The protein resides in the secreted. In terms of biological role, has antimicrobial activity. This chain is Cruzioseptin-14, found in Cruziohyla calcarifer (Splendid leaf frog).